The sequence spans 282 residues: Pantothenate synthetase (282 aa).

30–37 (MGYLHEGH) serves as a coordination point for ATP. His-37 serves as the catalytic Proton donor. Gln-61 contacts (R)-pantoate. Gln-61 is a beta-alanine binding site. ATP is bound at residue 147–150 (GMKD). Gln-153 contacts (R)-pantoate. ATP contacts are provided by residues Val-176 and 184-187 (KSSR).

It belongs to the pantothenate synthetase family. As to quaternary structure, homodimer.

The protein localises to the cytoplasm. It catalyses the reaction (R)-pantoate + beta-alanine + ATP = (R)-pantothenate + AMP + diphosphate + H(+). The protein operates within cofactor biosynthesis; (R)-pantothenate biosynthesis; (R)-pantothenate from (R)-pantoate and beta-alanine: step 1/1. In terms of biological role, catalyzes the condensation of pantoate with beta-alanine in an ATP-dependent reaction via a pantoyl-adenylate intermediate. In Bacillus cereus (strain B4264), this protein is Pantothenate synthetase.